A 143-amino-acid chain; its full sequence is Large ribosomal subunit protein uL16 (143 aa).

It belongs to the universal ribosomal protein uL16 family. Part of the 50S ribosomal subunit.

Functionally, binds 23S rRNA and is also seen to make contacts with the A and possibly P site tRNAs. In Thermosynechococcus vestitus (strain NIES-2133 / IAM M-273 / BP-1), this protein is Large ribosomal subunit protein uL16.